Consider the following 263-residue polypeptide: Endonuclease 8 (263 aa).

The active-site Schiff-base intermediate with DNA is the Pro2. The active-site Proton donor is Glu3. Lys53 serves as the catalytic Proton donor; for beta-elimination activity. The DNA site is built by Gln70, Arg125, and Asn169. An FPG-type zinc finger spans residues 229-263; sequence KVFHRDGEACERCGGIIEKTTLSSRPFYWCPHCQK. Arg253 acts as the Proton donor; for delta-elimination activity in catalysis.

Belongs to the FPG family. Zn(2+) serves as cofactor.

The catalysed reaction is 2'-deoxyribonucleotide-(2'-deoxyribose 5'-phosphate)-2'-deoxyribonucleotide-DNA = a 3'-end 2'-deoxyribonucleotide-(2,3-dehydro-2,3-deoxyribose 5'-phosphate)-DNA + a 5'-end 5'-phospho-2'-deoxyribonucleoside-DNA + H(+). Functionally, involved in base excision repair of DNA damaged by oxidation or by mutagenic agents. Acts as a DNA glycosylase that recognizes and removes damaged bases. Has a preference for oxidized pyrimidines, such as thymine glycol, 5,6-dihydrouracil and 5,6-dihydrothymine. Has AP (apurinic/apyrimidinic) lyase activity and introduces nicks in the DNA strand. Cleaves the DNA backbone by beta-delta elimination to generate a single-strand break at the site of the removed base with both 3'- and 5'-phosphates. This chain is Endonuclease 8, found in Salmonella agona (strain SL483).